Reading from the N-terminus, the 211-residue chain is Protein GrpE (211 aa).

The tract at residues 1 to 43 (MTDETTKNGPDATAADAAADAAANVEIDNSVQEEAKQPDPLEL) is disordered. Over residues 11-23 (DATAADAAADAAA) the composition is skewed to low complexity. Over residues 33–43 (EEAKQPDPLEL) the composition is skewed to basic and acidic residues.

It belongs to the GrpE family. In terms of assembly, homodimer.

The protein resides in the cytoplasm. Participates actively in the response to hyperosmotic and heat shock by preventing the aggregation of stress-denatured proteins, in association with DnaK and GrpE. It is the nucleotide exchange factor for DnaK and may function as a thermosensor. Unfolded proteins bind initially to DnaJ; upon interaction with the DnaJ-bound protein, DnaK hydrolyzes its bound ATP, resulting in the formation of a stable complex. GrpE releases ADP from DnaK; ATP binding to DnaK triggers the release of the substrate protein, thus completing the reaction cycle. Several rounds of ATP-dependent interactions between DnaJ, DnaK and GrpE are required for fully efficient folding. The sequence is that of Protein GrpE from Rhizobium etli (strain ATCC 51251 / DSM 11541 / JCM 21823 / NBRC 15573 / CFN 42).